Here is a 529-residue protein sequence, read N- to C-terminus: Bifunctional purine biosynthesis protein PurH (529 aa).

In terms of domain architecture, MGS-like spans 1–148 (MQQRRPVRRA…KNHKDVAIVV (148 aa)). K287 is modified (N6-acetyllysine).

This sequence belongs to the PurH family.

It carries out the reaction (6R)-10-formyltetrahydrofolate + 5-amino-1-(5-phospho-beta-D-ribosyl)imidazole-4-carboxamide = 5-formamido-1-(5-phospho-D-ribosyl)imidazole-4-carboxamide + (6S)-5,6,7,8-tetrahydrofolate. The catalysed reaction is IMP + H2O = 5-formamido-1-(5-phospho-D-ribosyl)imidazole-4-carboxamide. It participates in purine metabolism; IMP biosynthesis via de novo pathway; 5-formamido-1-(5-phospho-D-ribosyl)imidazole-4-carboxamide from 5-amino-1-(5-phospho-D-ribosyl)imidazole-4-carboxamide (10-formyl THF route): step 1/1. Its pathway is purine metabolism; IMP biosynthesis via de novo pathway; IMP from 5-formamido-1-(5-phospho-D-ribosyl)imidazole-4-carboxamide: step 1/1. The sequence is that of Bifunctional purine biosynthesis protein PurH from Escherichia coli O9:H4 (strain HS).